Here is a 248-residue protein sequence, read N- to C-terminus: Small ribosomal subunit protein uS3 (248 aa).

The 69-residue stretch at 38–106 (IREFLSEGLE…QVQLNILEVK (69 aa)) folds into the KH type-2 domain. Residues 214 to 229 (SLMNARDERPSRGGRR) are compositionally biased toward basic and acidic residues. The disordered stretch occupies residues 214–248 (SLMNARDERPSRGGRRERPRRGGARRQRAEKKQEG). The span at 230-242 (ERPRRGGARRQRA) shows a compositional bias: basic residues.

The protein belongs to the universal ribosomal protein uS3 family. Part of the 30S ribosomal subunit. Forms a tight complex with proteins S10 and S14.

Functionally, binds the lower part of the 30S subunit head. Binds mRNA in the 70S ribosome, positioning it for translation. In Corynebacterium urealyticum (strain ATCC 43042 / DSM 7109), this protein is Small ribosomal subunit protein uS3.